Here is a 279-residue protein sequence, read N- to C-terminus: Acetylglutamate kinase (279 aa).

Substrate contacts are provided by residues 62-63 (GG), Arg84, and Asn177.

This sequence belongs to the acetylglutamate kinase family. ArgB subfamily.

Its subcellular location is the cytoplasm. The enzyme catalyses N-acetyl-L-glutamate + ATP = N-acetyl-L-glutamyl 5-phosphate + ADP. It participates in amino-acid biosynthesis; L-arginine biosynthesis; N(2)-acetyl-L-ornithine from L-glutamate: step 2/4. Functionally, catalyzes the ATP-dependent phosphorylation of N-acetyl-L-glutamate. The sequence is that of Acetylglutamate kinase from Pseudothermotoga lettingae (strain ATCC BAA-301 / DSM 14385 / NBRC 107922 / TMO) (Thermotoga lettingae).